The following is a 71-amino-acid chain: Small ribosomal subunit protein bS21 (71 aa).

The protein belongs to the bacterial ribosomal protein bS21 family.

In Wigglesworthia glossinidia brevipalpis, this protein is Small ribosomal subunit protein bS21.